The sequence spans 489 residues: CBL-interacting serine/threonine-protein kinase 12 (489 aa).

Positions Tyr26–Phe280 constitute a Protein kinase domain. ATP is bound by residues Leu32–Val40 and Lys55. Catalysis depends on Asp148, which acts as the Proton acceptor. The activation loop stretch occupies residues Asp166–Glu195. Position 170 is a phosphoserine (Ser170). At Thr184 the chain carries Phosphothreonine. The NAF domain occupies Pro336 to Asp360. Positions Gly363–Val392 are PPI.

It belongs to the protein kinase superfamily. CAMK Ser/Thr protein kinase family. SNF1 subfamily. In terms of assembly, interacts with CBL2 and CBL3. It depends on Mn(2+) as a cofactor. As to expression, expressed in roots and shoots.

It carries out the reaction L-seryl-[protein] + ATP = O-phospho-L-seryl-[protein] + ADP + H(+). It catalyses the reaction L-threonyl-[protein] + ATP = O-phospho-L-threonyl-[protein] + ADP + H(+). Functionally, CIPK serine-threonine protein kinases interact with CBL proteins. Binding of a CBL protein to the regulatory NAF domain of CIPK protein lead to the activation of the kinase in a calcium-dependent manner. This is CBL-interacting serine/threonine-protein kinase 12 (CIPK12) from Arabidopsis thaliana (Mouse-ear cress).